A 1036-amino-acid chain; its full sequence is Exportin-T (1036 aa).

Belongs to the exportin family.

The protein localises to the nucleus. Its subcellular location is the cytoplasm. Its function is as follows. tRNA nucleus export receptor which facilitates tRNA translocation across the nuclear pore complex. Involved in pre-tRNA splicing, probably by affecting the interaction of pre-tRNA with splicing endonuclease. This chain is Exportin-T (LOS1), found in Phaeosphaeria nodorum (strain SN15 / ATCC MYA-4574 / FGSC 10173) (Glume blotch fungus).